A 248-amino-acid chain; its full sequence is Homeobox-leucine zipper protein HOX15 (248 aa).

Residues 1–44 are disordered; that stretch reads MAQDDEDVGLALGLSLGSGGHRRQRESRDEAPSSAAASLLTLRL. Positions 32–44 are enriched in low complexity; it reads PSSAAASLLTLRL. The homeobox DNA-binding region spans 91-150; that stretch reads NSRKKLRLSKEQSALLEDRFKEHSTLNPKQKVALAKQLNLRPRQVEVWFQNRRARTKLKQ. Residues 149-193 form a leucine-zipper region; the sequence is KQTEVDCELLKRCCETLTEENRRLHRELQQLRALTHSTAAGFFMA. The interval 223–248 is disordered; sequence PTAAADRTNKPTAPHLFSPFAKSAAC.

It belongs to the HD-ZIP homeobox family. Class II subfamily. Expressed in seedlings, stems, leaf blades and panicles.

It is found in the nucleus. Functionally, probable transcription factor. The chain is Homeobox-leucine zipper protein HOX15 (HOX15) from Oryza sativa subsp. indica (Rice).